The sequence spans 382 residues: D-galactonate dehydratase 1 (382 aa).

Asp183 serves as a coordination point for Mg(2+). The active-site Proton donor is the His185. The Mg(2+) site is built by Glu209 and Glu235. Catalysis depends on His285, which acts as the Proton acceptor.

Belongs to the mandelate racemase/muconate lactonizing enzyme family. GalD subfamily. Requires Mg(2+) as cofactor.

The catalysed reaction is D-galactonate = 2-dehydro-3-deoxy-D-galactonate + H2O. The protein operates within carbohydrate acid metabolism; D-galactonate degradation; D-glyceraldehyde 3-phosphate and pyruvate from D-galactonate: step 1/3. Catalyzes the dehydration of D-galactonate to 2-keto-3-deoxy-D-galactonate. This is D-galactonate dehydratase 1 from Escherichia coli (strain SMS-3-5 / SECEC).